We begin with the raw amino-acid sequence, 157 residues long: Dihydrofolate reductase type 1 (157 aa).

Residues 2–156 (KLSLMVAISK…INYSYQIWQK (155 aa)) form the DHFR domain.

This sequence belongs to the dihydrofolate reductase family. As to quaternary structure, homodimer.

The catalysed reaction is (6S)-5,6,7,8-tetrahydrofolate + NADP(+) = 7,8-dihydrofolate + NADPH + H(+). It participates in cofactor biosynthesis; tetrahydrofolate biosynthesis; 5,6,7,8-tetrahydrofolate from 7,8-dihydrofolate: step 1/1. Key enzyme in folate metabolism. Catalyzes an essential reaction for de novo glycine and purine synthesis, and for DNA precursor synthesis. The polypeptide is Dihydrofolate reductase type 1 (dhfrI) (Escherichia coli).